Here is a 135-residue protein sequence, read N- to C-terminus: MGVLSALARGFVRGADRMAEWTSKRGPRTFYKSRGARPTGIVTSSRKFIPIRAMIPEFAVPNLEGFNLKAYVSYKTPAGTEEPMTPEKLFNEVVAPQIQRDIEEGVFSEDNLEKYGLEKTQEGKLFKLHPKNFAR.

The N-terminal 13 residues, 1–13 (MGVLSALARGFVR), are a transit peptide targeting the mitochondrion.

This sequence belongs to the mitochondrion-specific ribosomal protein mL41 family. As to quaternary structure, component of the mitochondrial ribosome large subunit (39S) which comprises a 16S rRNA and about 50 distinct proteins.

Its subcellular location is the mitochondrion. Functionally, component of the mitochondrial ribosome large subunit. Also involved in apoptosis and cell cycle. The chain is Large ribosomal subunit protein mL41 (mrpl41) from Danio rerio (Zebrafish).